We begin with the raw amino-acid sequence, 212 residues long: Large ribosomal subunit protein uL1 (212 aa).

Belongs to the universal ribosomal protein uL1 family. As to quaternary structure, part of the 50S ribosomal subunit.

Functionally, binds directly to 23S rRNA. Probably involved in E site tRNA release. Its function is as follows. Protein L1 is also a translational repressor protein, it controls the translation of its operon by binding to its mRNA. The protein is Large ribosomal subunit protein uL1 of Methanothrix thermoacetophila (strain DSM 6194 / JCM 14653 / NBRC 101360 / PT) (Methanosaeta thermophila).